We begin with the raw amino-acid sequence, 430 residues long: Serine--tRNA ligase (430 aa).

236 to 238 (TAE) is an L-serine binding site. Residue 267 to 269 (RSE) coordinates ATP. An L-serine-binding site is contributed by E290. 354-357 (EISS) is an ATP binding site. S390 lines the L-serine pocket.

The protein belongs to the class-II aminoacyl-tRNA synthetase family. Type-1 seryl-tRNA synthetase subfamily. As to quaternary structure, homodimer. The tRNA molecule binds across the dimer.

The protein localises to the cytoplasm. It catalyses the reaction tRNA(Ser) + L-serine + ATP = L-seryl-tRNA(Ser) + AMP + diphosphate + H(+). It carries out the reaction tRNA(Sec) + L-serine + ATP = L-seryl-tRNA(Sec) + AMP + diphosphate + H(+). It functions in the pathway aminoacyl-tRNA biosynthesis; selenocysteinyl-tRNA(Sec) biosynthesis; L-seryl-tRNA(Sec) from L-serine and tRNA(Sec): step 1/1. In terms of biological role, catalyzes the attachment of serine to tRNA(Ser). Is also able to aminoacylate tRNA(Sec) with serine, to form the misacylated tRNA L-seryl-tRNA(Sec), which will be further converted into selenocysteinyl-tRNA(Sec). The polypeptide is Serine--tRNA ligase (Idiomarina loihiensis (strain ATCC BAA-735 / DSM 15497 / L2-TR)).